A 118-amino-acid chain; its full sequence is Basic phospholipase A2 2 (118 aa).

Cystine bridges form between Cys11–Cys71, Cys27–Cys117, Cys29–Cys45, Cys44–Cys98, Cys51–Cys91, Cys60–Cys84, and Cys78–Cys89. 3 residues coordinate Ca(2+): Tyr28, Gly30, and Gly32. Residue His48 is part of the active site. Residue Asp49 coordinates Ca(2+). The active site involves Asp92.

The protein belongs to the phospholipase A2 family. Group I subfamily. D49 sub-subfamily. The cofactor is Ca(2+). As to expression, expressed by the venom gland.

It is found in the secreted. The enzyme catalyses a 1,2-diacyl-sn-glycero-3-phosphocholine + H2O = a 1-acyl-sn-glycero-3-phosphocholine + a fatty acid + H(+). Functionally, snake venom phospholipase A2 (PLA2) that inhibits neuromuscular transmission by blocking acetylcholine release from the nerve termini. PLA2 catalyzes the calcium-dependent hydrolysis of the 2-acyl groups in 3-sn-phosphoglycerides. The sequence is that of Basic phospholipase A2 2 from Laticauda colubrina (Yellow-lipped sea krait).